A 260-amino-acid chain; its full sequence is Octanoyltransferase (260 aa).

One can recognise a BPL/LPL catalytic domain in the interval 42–241; that stretch reads PQVPDGLLLL…SFCQVFGLQA (200 aa). Substrate is bound by residues 97 to 104, 172 to 174, and 185 to 187; these read RGGEVTYH, AIG, and GFA. C203 acts as the Acyl-thioester intermediate in catalysis.

It belongs to the LipB family.

It is found in the cytoplasm. It catalyses the reaction octanoyl-[ACP] + L-lysyl-[protein] = N(6)-octanoyl-L-lysyl-[protein] + holo-[ACP] + H(+). Its pathway is protein modification; protein lipoylation via endogenous pathway; protein N(6)-(lipoyl)lysine from octanoyl-[acyl-carrier-protein]: step 1/2. Catalyzes the transfer of endogenously produced octanoic acid from octanoyl-acyl-carrier-protein onto the lipoyl domains of lipoate-dependent enzymes. Lipoyl-ACP can also act as a substrate although octanoyl-ACP is likely to be the physiological substrate. This chain is Octanoyltransferase, found in Synechococcus sp. (strain JA-3-3Ab) (Cyanobacteria bacterium Yellowstone A-Prime).